A 392-amino-acid polypeptide reads, in one-letter code: Lysine acetyltransferase (392 aa).

The catalysed reaction is L-lysine + acetyl-CoA = N(6)-acetyl-L-lysine + CoA + H(+). It functions in the pathway amino-acid degradation; L-lysine degradation via acetylation pathway; glutarate from L-lysine: step 1/6. Activity is inhibited by 5-aminovalerate. Its function is as follows. Lysine N-6-acetyl transferase (LAT) that catalyzes the first step of the lysine degradation pathway. In Yarrowia lipolytica (strain CLIB 122 / E 150) (Yeast), this protein is Lysine acetyltransferase.